Here is a 312-residue protein sequence, read N- to C-terminus: DNA-directed RNA polymerase subunit alpha (312 aa).

The tract at residues 1-229 (MLQYQIDRID…ELFQPLATVT (229 aa)) is alpha N-terminal domain (alpha-NTD). The alpha C-terminal domain (alpha-CTD) stretch occupies residues 246-312 (IPLEELNLSV…ISIPQSRTSV (67 aa)).

This sequence belongs to the RNA polymerase alpha chain family. In terms of assembly, in cyanobacteria the RNAP catalytic core is composed of 2 alpha, 1 beta, 1 beta', 1 gamma and 1 omega subunit. When a sigma factor is associated with the core the holoenzyme is formed, which can initiate transcription.

It carries out the reaction RNA(n) + a ribonucleoside 5'-triphosphate = RNA(n+1) + diphosphate. In terms of biological role, DNA-dependent RNA polymerase catalyzes the transcription of DNA into RNA using the four ribonucleoside triphosphates as substrates. This chain is DNA-directed RNA polymerase subunit alpha, found in Prochlorococcus marinus subsp. pastoris (strain CCMP1986 / NIES-2087 / MED4).